Here is a 117-residue protein sequence, read N- to C-terminus: G antigen 6 (117 aa).

Residues 1 to 117 form a disordered region; the sequence is MSWRGRSTYY…PEEGEKQSQC (117 aa). Acidic residues-rich tracts occupy residues 32–45 and 87–96; these read FSDE…EEGE and ECEDGPDGQE. The span at 103-117 shows a compositional bias: basic and acidic residues; it reads EEVKTPEEGEKQSQC.

The protein belongs to the GAGE family. As to expression, expressed in a variety of tumor tissues but not in normal tissues, except testis.

The sequence is that of G antigen 6 (GAGE6) from Homo sapiens (Human).